Consider the following 440-residue polypeptide: R3H and coiled-coil domain-containing protein 1 (440 aa).

Positions 16-81 (NDFVHRIQEE…KRRTVICHQD (66 aa)) constitute an R3H domain. The disordered stretch occupies residues 154–225 (TSVLKREAPA…LGPESQSGKG (72 aa)). A compositionally biased stretch (basic and acidic residues) spans 157–168 (LKREAPAGRDPE). The residue at position 236 (serine 236) is a Phosphoserine. A coiled-coil region spans residues 242-300 (LEKGKESLLEKRLVAEEEEDEEEVEEDGPSSCSEDDYSELLQEITDNLTKKEIQIEKIH). Residues 254-276 (LVAEEEEDEEEVEEDGPSSCSED) form a disordered region. The span at 257 to 276 (EEEEDEEEVEEDGPSSCSED) shows a compositional bias: acidic residues.

This chain is R3H and coiled-coil domain-containing protein 1, found in Homo sapiens (Human).